The primary structure comprises 1171 residues: DNA-directed RNA polymerase subunit beta (1171 aa).

Belongs to the RNA polymerase beta chain family. As to quaternary structure, the RNAP catalytic core consists of 2 alpha, 1 beta, 1 beta' and 1 omega subunit. When a sigma factor is associated with the core the holoenzyme is formed, which can initiate transcription.

The enzyme catalyses RNA(n) + a ribonucleoside 5'-triphosphate = RNA(n+1) + diphosphate. DNA-dependent RNA polymerase catalyzes the transcription of DNA into RNA using the four ribonucleoside triphosphates as substrates. This chain is DNA-directed RNA polymerase subunit beta, found in Arthrobacter sp. (strain FB24).